A 231-amino-acid polypeptide reads, in one-letter code: Uracil-DNA glycosylase (231 aa).

Aspartate 71 acts as the Proton acceptor in catalysis.

This sequence belongs to the uracil-DNA glycosylase (UDG) superfamily. UNG family.

Its subcellular location is the cytoplasm. It catalyses the reaction Hydrolyzes single-stranded DNA or mismatched double-stranded DNA and polynucleotides, releasing free uracil.. Its function is as follows. Excises uracil residues from the DNA which can arise as a result of misincorporation of dUMP residues by DNA polymerase or due to deamination of cytosine. This chain is Uracil-DNA glycosylase, found in Pseudomonas aeruginosa (strain UCBPP-PA14).